We begin with the raw amino-acid sequence, 79 residues long: MVEVLRFKDEKEYREWLSWQSGSVKDKASEYERRYPGTVPIVIELDVDTCPYCGGGEGTHIFIPPHLENIISQIVFDSQ.

This is an uncharacterized protein from Acidianus two-tailed virus (ATV).